Here is a 151-residue protein sequence, read N- to C-terminus: Large ribosomal subunit protein uL13 (151 aa).

It belongs to the universal ribosomal protein uL13 family. In terms of assembly, part of the 50S ribosomal subunit.

Functionally, this protein is one of the early assembly proteins of the 50S ribosomal subunit, although it is not seen to bind rRNA by itself. It is important during the early stages of 50S assembly. The protein is Large ribosomal subunit protein uL13 of Synechococcus sp. (strain JA-2-3B'a(2-13)) (Cyanobacteria bacterium Yellowstone B-Prime).